A 223-amino-acid chain; its full sequence is Putative 3-methyladenine DNA glycosylase (223 aa).

This sequence belongs to the DNA glycosylase MPG family.

This is Putative 3-methyladenine DNA glycosylase from Rhodococcus jostii (strain RHA1).